Consider the following 211-residue polypeptide: 1-deoxy-D-xylulose 5-phosphate reductoisomerase (211 aa).

Aspartate 14 serves as a coordination point for Mn(2+). 8 residues coordinate 1-deoxy-D-xylulose 5-phosphate: serine 15, glutamate 16, serine 40, histidine 63, serine 76, asparagine 81, lysine 82, and glutamate 85. Residue glutamate 16 coordinates Mn(2+). Residue glutamate 85 coordinates Mn(2+).

Belongs to the DXR family. The cofactor is Mn(2+). Mg(2+) is required as a cofactor. In terms of tissue distribution, mostly expressed in flowers and, to a lower extent, in leaves.

It is found in the plastid. The protein resides in the chloroplast stroma. It catalyses the reaction 2-C-methyl-D-erythritol 4-phosphate + NADP(+) = 1-deoxy-D-xylulose 5-phosphate + NADPH + H(+). It participates in isoprenoid biosynthesis; isopentenyl diphosphate biosynthesis via DXP pathway; isopentenyl diphosphate from 1-deoxy-D-xylulose 5-phosphate: step 1/6. Enzyme of the plastid non-mevalonate pathway for isoprenoid biosynthesis that catalyzes the NADPH-dependent rearrangement and reduction of 1-deoxy-D-xylulose-5-phosphate (DXP) to 2-C-methyl-D-erythritol 4-phosphate (MEP). Required for chloroplast development. This is 1-deoxy-D-xylulose 5-phosphate reductoisomerase from Thymus vulgaris (Thyme).